Reading from the N-terminus, the 675-residue chain is MTVFPTLGLLFLCQLLATTSAQRVGPQGPPGPRGPPGPSGKDGIDGEPGPSGLPGPPGPKGAPGKPGAAGEAGLPGLPGVDGLTGTDGPPGPNGPPGDRGALGPAGPPGPAGKGLPGPPGPPGPSGLPGGNGFRGPPGPSGLPGFPGPPGPPGPPGLAGIIPEGGGDLQCPALCPPGPPGPPGMPGFKGHTGHKGGPGEIGKEGEKGSPGPPGPPGIPGSVGLQGPRGLRGLPGPMGPAGDRGDIGFRGPPGIPGPPGRAGDQGNKGPQGFRGPKGDTGRPGPKGNPGARGLIGEPGIPGKDGRDGAPGLDGEKGDAARMGVPGEKGPNGLPGLPGRAGIKGSKGEPGSPGEMGEAGPSGEPGIPGDVGIPGDRGLPGPRGATGPVGLPGPIGAPGVRGFQGPKGSSGEPGLPGPTGIRGESGDRGPAGVIGAKGSQGIAGADGLPGDKGELGPFGPPGQKGEPGKRGELGPKGAQGPNGTAGAPGIPGHPGPMGHQGEQGVPGITGKPGPPGKEASEQHIRELCGEMINDQIAQLAANLRKPLSPGMTGRPGPAGPPGPPGATGSVGHPGARGPPGYRGPTGELGDPGPRGDTGEKGDKGPAGQGIDGPDGDQGPQGLPGVPGISKNGRDGAQGEPGLPGDPGTPGAVGAQGTPGICDTSACMGAVGASTSKKS.

The signal sequence occupies residues 1–21 (MTVFPTLGLLFLCQLLATTSA). 2 disordered regions span residues 22-517 (QRVG…KEAS) and 542-660 (KPLS…ICDT). Positions 25 to 515 (GPQGPPGPRG…TGKPGPPGKE (491 aa)) are triple-helical region 3 (COL3). Pro residues-rich tracts occupy residues 27–38 (QGPPGPRGPPGP) and 51–60 (SGLPGPPGPK). Residues 62-87 (APGKPGAAGEAGLPGLPGVDGLTGTD) are compositionally biased toward low complexity. Positions 105-125 (AGPPGPAGKGLPGPPGPPGPS) are enriched in pro residues. Residues 126-135 (GLPGGNGFRG) are compositionally biased toward gly residues. Pro residues-rich tracts occupy residues 136–155 (PPGP…PGPP) and 173–184 (LCPPGPPGPPGM). Low complexity predominate over residues 218–233 (PGSVGLQGPRGLRGLP). Positions 242-244 (RGD) match the Cell attachment site motif. A compositionally biased stretch (basic and acidic residues) spans 301–317 (KDGRDGAPGLDGEKGDA). Residues 361 to 374 (EPGIPGDVGIPGDR) show a composition bias toward low complexity. Asparagine 479 is a glycosylation site (N-linked (GlcNAc...) asparagine). Residues 481–508 (TAGAPGIPGHPGPMGHQGEQGVPGITGK) show a composition bias toward low complexity. The interval 516 to 546 (ASEQHIRELCGEMINDQIAQLAANLRKPLSP) is nonhelical region 3 (NC3). The segment at 547 to 626 (GMTGRPGPAG…QGLPGVPGIS (80 aa)) is triple-helical region 2 (COL2). A compositionally biased stretch (low complexity) spans 569–582 (HPGARGPPGYRGPT). A Cell attachment site motif is present at residues 591-593 (RGD). Low complexity predominate over residues 613–624 (DQGPQGLPGVPG). A nonhelical region 2 (NC2) region spans residues 627–631 (KNGRD). The triple-helical region 1 (COL1) stretch occupies residues 632–658 (GAQGEPGLPGDPGTPGAVGAQGTPGIC). A nonhelical region 1 (NC1) region spans residues 659–675 (DTSACMGAVGASTSKKS).

Belongs to the fibril-associated collagens with interrupted helices (FACIT) family. In terms of assembly, trimers composed of three different chains: alpha 1(IX), alpha 2(IX), and alpha 3(IX). Prolines at the third position of the tripeptide repeating unit (G-X-Y) are hydroxylated in some or all of the chains.

Its subcellular location is the secreted. It localises to the extracellular space. The protein resides in the extracellular matrix. Collagen type IX is a minor cartilage non-fibrillar collagen. It is associated with type II collagen fibrils. In Gallus gallus (Chicken), this protein is Collagen alpha-3(IX) chain (COL9A3).